The sequence spans 312 residues: D-alanine--D-alanine ligase (312 aa).

In terms of domain architecture, ATP-grasp spans 108–308 (KLVWQQTGIP…YSELVVKVLS (201 aa)). An ATP-binding site is contributed by 138-193 (AAKLGVPLFVKPASEGSSVAVEKVKSADALPAALEEAAKHDKIVIVEKSIEGGGEY). 3 residues coordinate Mg(2+): Asp262, Glu275, and Asn277.

It belongs to the D-alanine--D-alanine ligase family. The cofactor is Mg(2+). Requires Mn(2+) as cofactor.

The protein resides in the cytoplasm. The enzyme catalyses 2 D-alanine + ATP = D-alanyl-D-alanine + ADP + phosphate + H(+). It participates in cell wall biogenesis; peptidoglycan biosynthesis. In terms of biological role, cell wall formation. This chain is D-alanine--D-alanine ligase, found in Burkholderia pseudomallei (strain 668).